Consider the following 256-residue polypeptide: Acetyl-coenzyme A carboxylase carboxyl transferase subunit alpha (256 aa).

One can recognise a CoA carboxyltransferase C-terminal domain in the interval Met-1–Gln-236.

The protein belongs to the AccA family. In terms of assembly, acetyl-CoA carboxylase is a heterohexamer composed of biotin carboxyl carrier protein (AccB), biotin carboxylase (AccC) and two subunits each of ACCase subunit alpha (AccA) and ACCase subunit beta (AccD).

Its subcellular location is the cytoplasm. It catalyses the reaction N(6)-carboxybiotinyl-L-lysyl-[protein] + acetyl-CoA = N(6)-biotinyl-L-lysyl-[protein] + malonyl-CoA. It participates in lipid metabolism; malonyl-CoA biosynthesis; malonyl-CoA from acetyl-CoA: step 1/1. Component of the acetyl coenzyme A carboxylase (ACC) complex. First, biotin carboxylase catalyzes the carboxylation of biotin on its carrier protein (BCCP) and then the CO(2) group is transferred by the carboxyltransferase to acetyl-CoA to form malonyl-CoA. The chain is Acetyl-coenzyme A carboxylase carboxyl transferase subunit alpha from Streptococcus equi subsp. zooepidemicus (strain MGCS10565).